A 62-amino-acid chain; its full sequence is Short neurotoxin 1 (62 aa).

The segment covering 1–17 (MQCCNQQSSQPKTTTTC) has biased composition (polar residues). The tract at residues 1 to 20 (MQCCNQQSSQPKTTTTCPGG) is disordered. Cystine bridges form between C3/C24, C17/C41, C43/C54, and C55/C60.

Belongs to the three-finger toxin family. Short-chain subfamily. Type I alpha-neurotoxin sub-subfamily. As to expression, expressed by the venom gland.

The protein localises to the secreted. Its function is as follows. Binds to muscle nicotinic acetylcholine receptor (nAChR) and inhibit acetylcholine from binding to the receptor, thereby impairing neuromuscular transmission. The sequence is that of Short neurotoxin 1 from Acanthophis antarcticus (Common death adder).